The primary structure comprises 197 residues: MTLDIVNWKAIVEALLYAAGDEGLTKKQLLSVLEVDEAELLDIMLDVKETYEKEDRGIELVEYADTYMLSTKKEFAVYLKKLIEAPSKGLSQAALEVLAIVSYKQPITRAEVEEIRGVKSERILQSLVAKALLCEVGRADGPGRAILYGTTETFLEQFGLKTLEELPPLPENVEEDGVQEEADLFFENFNQTFEDLK.

The protein belongs to the ScpB family. In terms of assembly, homodimer. Homodimerization may be required to stabilize the binding of ScpA to the Smc head domains. Component of a cohesin-like complex composed of ScpA, ScpB and the Smc homodimer, in which ScpA and ScpB bind to the head domain of Smc. The presence of the three proteins is required for the association of the complex with DNA.

Its subcellular location is the cytoplasm. Its function is as follows. Participates in chromosomal partition during cell division. May act via the formation of a condensin-like complex containing Smc and ScpA that pull DNA away from mid-cell into both cell halves. The protein is Segregation and condensation protein B of Bacillus licheniformis (strain ATCC 14580 / DSM 13 / JCM 2505 / CCUG 7422 / NBRC 12200 / NCIMB 9375 / NCTC 10341 / NRRL NRS-1264 / Gibson 46).